The following is a 79-amino-acid chain: Acyl carrier protein (79 aa).

Residues Ser2 to Ala77 enclose the Carrier domain. Residue Ser37 is modified to O-(pantetheine 4'-phosphoryl)serine.

It belongs to the acyl carrier protein (ACP) family. In terms of processing, 4'-phosphopantetheine is transferred from CoA to a specific serine of apo-ACP by AcpS. This modification is essential for activity because fatty acids are bound in thioester linkage to the sulfhydryl of the prosthetic group.

It is found in the cytoplasm. It participates in lipid metabolism; fatty acid biosynthesis. Functionally, carrier of the growing fatty acid chain in fatty acid biosynthesis. This Xylella fastidiosa (strain M23) protein is Acyl carrier protein.